The following is a 585-amino-acid chain: Proline--tRNA ligase (585 aa).

It belongs to the class-II aminoacyl-tRNA synthetase family. ProS type 1 subfamily. As to quaternary structure, homodimer.

It localises to the cytoplasm. The catalysed reaction is tRNA(Pro) + L-proline + ATP = L-prolyl-tRNA(Pro) + AMP + diphosphate. Functionally, catalyzes the attachment of proline to tRNA(Pro) in a two-step reaction: proline is first activated by ATP to form Pro-AMP and then transferred to the acceptor end of tRNA(Pro). As ProRS can inadvertently accommodate and process non-cognate amino acids such as alanine and cysteine, to avoid such errors it has two additional distinct editing activities against alanine. One activity is designated as 'pretransfer' editing and involves the tRNA(Pro)-independent hydrolysis of activated Ala-AMP. The other activity is designated 'posttransfer' editing and involves deacylation of mischarged Ala-tRNA(Pro). The misacylated Cys-tRNA(Pro) is not edited by ProRS. In Cutibacterium acnes (strain DSM 16379 / KPA171202) (Propionibacterium acnes), this protein is Proline--tRNA ligase.